A 75-amino-acid chain; its full sequence is Cytochrome c oxidase subunit 6C (75 aa).

Over 1 to 13 (MAPEVLPKPRMRG) the chain is Mitochondrial matrix. The helical transmembrane segment at 14–54 (LLARRLRNHMAVAFVLSLGVAALYKFRVADQRKKAYADFYR) threads the bilayer. The Mitochondrial intermembrane portion of the chain corresponds to 55–75 (NYDVMKDFEEMRKAGIFQSVK).

Belongs to the cytochrome c oxidase subunit 6c family. In terms of assembly, component of the cytochrome c oxidase (complex IV, CIV), a multisubunit enzyme composed of 14 subunits. The complex is composed of a catalytic core of 3 subunits MT-CO1, MT-CO2 and MT-CO3, encoded in the mitochondrial DNA, and 11 supernumerary subunits COX4I1 (or COX4I2), COX5A, COX5B, COX6A1 (or COX6A2), COX6B1 (or COX6B2), COX6C, COX7A2 (or COX7A1), COX7B, COX7C, COX8A and NDUFA4, which are encoded in the nuclear genome. The complex exists as a monomer or a dimer and forms supercomplexes (SCs) in the inner mitochondrial membrane with NADH-ubiquinone oxidoreductase (complex I, CI) and ubiquinol-cytochrome c oxidoreductase (cytochrome b-c1 complex, complex III, CIII), resulting in different assemblies (supercomplex SCI(1)III(2)IV(1) and megacomplex MCI(2)III(2)IV(2)).

The protein localises to the mitochondrion inner membrane. The protein operates within energy metabolism; oxidative phosphorylation. Functionally, component of the cytochrome c oxidase, the last enzyme in the mitochondrial electron transport chain which drives oxidative phosphorylation. The respiratory chain contains 3 multisubunit complexes succinate dehydrogenase (complex II, CII), ubiquinol-cytochrome c oxidoreductase (cytochrome b-c1 complex, complex III, CIII) and cytochrome c oxidase (complex IV, CIV), that cooperate to transfer electrons derived from NADH and succinate to molecular oxygen, creating an electrochemical gradient over the inner membrane that drives transmembrane transport and the ATP synthase. Cytochrome c oxidase is the component of the respiratory chain that catalyzes the reduction of oxygen to water. Electrons originating from reduced cytochrome c in the intermembrane space (IMS) are transferred via the dinuclear copper A center (CU(A)) of subunit 2 and heme A of subunit 1 to the active site in subunit 1, a binuclear center (BNC) formed by heme A3 and copper B (CU(B)). The BNC reduces molecular oxygen to 2 water molecules using 4 electrons from cytochrome c in the IMS and 4 protons from the mitochondrial matrix. The polypeptide is Cytochrome c oxidase subunit 6C (COX6C) (Homo sapiens (Human)).